The primary structure comprises 340 residues: Heat-inducible transcription repressor HrcA (340 aa).

Belongs to the HrcA family.

Functionally, negative regulator of class I heat shock genes (grpE-dnaK-dnaJ and groELS operons). Prevents heat-shock induction of these operons. The sequence is that of Heat-inducible transcription repressor HrcA from Burkholderia mallei (strain NCTC 10247).